Reading from the N-terminus, the 188-residue chain is Large ribosomal subunit protein bL35m (188 aa).

This sequence belongs to the bacterial ribosomal protein bL35 family.

It localises to the mitochondrion. The protein is Large ribosomal subunit protein bL35m (MRPL35) of Pongo abelii (Sumatran orangutan).